We begin with the raw amino-acid sequence, 425 residues long: Divalent metal cation transporter MntH (425 aa).

11 consecutive transmembrane segments (helical) span residues 30-50 (LLPF…PGNF), 61-81 (GYML…IQSL), 107-127 (IGLW…EFIG), 134-154 (LLFG…SFAI), 167-187 (AGIA…TFFA), 209-231 (VLLA…HSAL), 255-275 (ILIA…VAAA), 294-314 (FGHL…LVAG), 344-364 (FITI…TTAL), 365-385 (VLSQ…LIMF), and 401-421 (ITVV…FLIV).

Belongs to the NRAMP family.

It localises to the cell membrane. Its function is as follows. H(+)-stimulated, divalent metal cation uptake system. Involved in manganese uptake. Can probably also transport cadmium, cobalt, copper and zinc, but not iron. May be the predominant transporter of manganese during logarithmic phase growth. The chain is Divalent metal cation transporter MntH from Bacillus subtilis (strain 168).